A 576-amino-acid chain; its full sequence is Potassium-transporting ATPase potassium-binding subunit (576 aa).

The next 12 membrane-spanning stretches (helical) occupy residues 3-23, 68-88, 137-157, 179-199, 267-287, 294-314, 339-359, 369-389, 391-411, 430-450, 495-515, and 537-557; these read IFLD…ISPI, LYAL…TLLF, GLAL…LVLI, ILYV…SQGV, FEAF…GYMI, WFLY…QYYF, FGIG…CGAV, LGGL…GGVG, GLYG…LMIG, VVIT…ALYT, ITTG…VFYM, and LVFG…TFLP.

Belongs to the KdpA family. The system is composed of three essential subunits: KdpA, KdpB and KdpC.

The protein localises to the cell inner membrane. Functionally, part of the high-affinity ATP-driven potassium transport (or Kdp) system, which catalyzes the hydrolysis of ATP coupled with the electrogenic transport of potassium into the cytoplasm. This subunit binds the periplasmic potassium ions and delivers the ions to the membrane domain of KdpB through an intramembrane tunnel. The chain is Potassium-transporting ATPase potassium-binding subunit from Hydrogenobaculum sp. (strain Y04AAS1).